A 443-amino-acid chain; its full sequence is Na(+)-translocating NADH-quinone reductase subunit A (443 aa).

It belongs to the NqrA family. In terms of assembly, composed of six subunits; NqrA, NqrB, NqrC, NqrD, NqrE and NqrF.

The catalysed reaction is a ubiquinone + n Na(+)(in) + NADH + H(+) = a ubiquinol + n Na(+)(out) + NAD(+). Its function is as follows. NQR complex catalyzes the reduction of ubiquinone-1 to ubiquinol by two successive reactions, coupled with the transport of Na(+) ions from the cytoplasm to the periplasm. NqrA to NqrE are probably involved in the second step, the conversion of ubisemiquinone to ubiquinol. The polypeptide is Na(+)-translocating NADH-quinone reductase subunit A (Actinobacillus succinogenes (strain ATCC 55618 / DSM 22257 / CCUG 43843 / 130Z)).